The following is a 472-amino-acid chain: Uronate isomerase (472 aa).

The protein belongs to the metallo-dependent hydrolases superfamily. Uronate isomerase family.

It carries out the reaction D-glucuronate = D-fructuronate. The catalysed reaction is aldehydo-D-galacturonate = keto-D-tagaturonate. Its pathway is carbohydrate metabolism; pentose and glucuronate interconversion. The protein is Uronate isomerase of Opitutus terrae (strain DSM 11246 / JCM 15787 / PB90-1).